A 125-amino-acid polypeptide reads, in one-letter code: Small ribosomal subunit protein eS8 (125 aa).

Residues 1–35 form a disordered region; sequence MQWQGRSVRKPSGGRYHTSQGKKRTEIGRAPAETH.

Belongs to the eukaryotic ribosomal protein eS8 family. In terms of assembly, part of the 30S ribosomal subunit.

The sequence is that of Small ribosomal subunit protein eS8 from Methanoculleus marisnigri (strain ATCC 35101 / DSM 1498 / JR1).